The chain runs to 459 residues: Trigger factor (459 aa).

The PPIase FKBP-type domain maps to 166–245 (GDFANIDLTA…VNSVKAEELP (80 aa)).

Belongs to the FKBP-type PPIase family. Tig subfamily.

It is found in the cytoplasm. The enzyme catalyses [protein]-peptidylproline (omega=180) = [protein]-peptidylproline (omega=0). Functionally, involved in protein export. Acts as a chaperone by maintaining the newly synthesized protein in an open conformation. Functions as a peptidyl-prolyl cis-trans isomerase. This chain is Trigger factor, found in Bifidobacterium longum subsp. infantis (strain ATCC 15697 / DSM 20088 / JCM 1222 / NCTC 11817 / S12).